The following is a 962-amino-acid chain: Vacuolar membrane protease (962 aa).

The Cytoplasmic portion of the chain corresponds to 1–14 (MLAQFLRSLFRFRK). A helical transmembrane segment spans residues 15–35 (TTVSVLLVATYVVVFLLNVWD). Topologically, residues 36 to 359 (RIRYQYSLPE…FVTASTKDLF (324 aa)) are vacuolar. The N-linked (GlcNAc...) asparagine glycan is linked to Asn118. Residues His153 and Asp165 each coordinate Zn(2+). Glu197 serves as the catalytic Proton acceptor. Residues Glu198, Glu223, and His297 each contribute to the Zn(2+) site. The chain crosses the membrane as a helical span at residues 360 to 380 (TLNCVVLSVIPVIILVLEFVI). Over 381 to 390 (QRRKTRERNP) the chain is Cytoplasmic. The chain crosses the membrane as a helical span at residues 391–411 (LLVWLRLPFSMFISYLVTATF). Residues 412-431 (RSSLFRVNPLIFSRDYVSPT) lie on the Vacuolar side of the membrane. A helical transmembrane segment spans residues 432–452 (IGFSFTFLILNYLVLSLLEYL). At 453 to 460 (APSRDLKT) the chain is on the cytoplasmic side. Residues 461-481 (VSFVELFFGMWIALLWATIRL) traverse the membrane as a helical segment. Over 482–489 (CTSKYTAT) the chain is Vacuolar. The chain crosses the membrane as a helical span at residues 490 to 510 (GVYPITVLYLLMSFGAIVGLV). Residues 511–601 (CSAFKRKHSV…VVSALNYDWS (91 aa)) are Cytoplasmic-facing. Residues 531–554 (APNTYSSIEESPQQATNTEAPNEN) are compositionally biased toward polar residues. A disordered region spans residues 531-563 (APNTYSSIEESPQQATNTEAPNENSPEEHDERA). Residues 602-622 (VQFLAVVPLASFFVIMCLSLI) traverse the membrane as a helical segment. Residues 623 to 639 (LDGIYQTCQEGFQATWN) are Vacuolar-facing. Residue Asn639 is glycosylated (N-linked (GlcNAc...) asparagine). Residues 640 to 660 (VSKISMLGGMLLAIPVLPFCY) form a helical membrane-spanning segment. A topological domain (cytoplasmic) is located at residue Lys661. Residues 662–682 (LNYFVSMVLLFAAASAGIFSF) form a helical membrane-spanning segment. Residues 683–962 (ERAPFTESSP…LVIVNDYIEL (280 aa)) lie on the Vacuolar side of the membrane. 2 N-linked (GlcNAc...) asparagine glycosylation sites follow: Asn812 and Asn839.

The protein belongs to the peptidase M28 family. Requires Zn(2+) as cofactor.

The protein localises to the vacuole membrane. In terms of biological role, may be involved in vacuolar sorting and osmoregulation. The protein is Vacuolar membrane protease of Lachancea thermotolerans (strain ATCC 56472 / CBS 6340 / NRRL Y-8284) (Yeast).